The primary structure comprises 594 residues: DNA ligase (594 aa).

An ATP-binding site is contributed by Glu280. Residue Lys282 is the N6-AMP-lysine intermediate of the active site. Arg287, Arg316, Glu345, Phe385, Arg456, and Lys462 together coordinate ATP.

This sequence belongs to the ATP-dependent DNA ligase family. Requires Mg(2+) as cofactor.

It carries out the reaction ATP + (deoxyribonucleotide)n-3'-hydroxyl + 5'-phospho-(deoxyribonucleotide)m = (deoxyribonucleotide)n+m + AMP + diphosphate.. In terms of biological role, DNA ligase that seals nicks in double-stranded DNA during DNA replication, DNA recombination and DNA repair. The polypeptide is DNA ligase (Halorubrum lacusprofundi (strain ATCC 49239 / DSM 5036 / JCM 8891 / ACAM 34)).